The chain runs to 285 residues: Bifunctional protein FolD (285 aa).

Residues 166–168 (GAS) and I232 contribute to the NADP(+) site.

It belongs to the tetrahydrofolate dehydrogenase/cyclohydrolase family. As to quaternary structure, homodimer.

The catalysed reaction is (6R)-5,10-methylene-5,6,7,8-tetrahydrofolate + NADP(+) = (6R)-5,10-methenyltetrahydrofolate + NADPH. The enzyme catalyses (6R)-5,10-methenyltetrahydrofolate + H2O = (6R)-10-formyltetrahydrofolate + H(+). The protein operates within one-carbon metabolism; tetrahydrofolate interconversion. Catalyzes the oxidation of 5,10-methylenetetrahydrofolate to 5,10-methenyltetrahydrofolate and then the hydrolysis of 5,10-methenyltetrahydrofolate to 10-formyltetrahydrofolate. This is Bifunctional protein FolD from Psychromonas ingrahamii (strain DSM 17664 / CCUG 51855 / 37).